A 96-amino-acid chain; its full sequence is ATP-dependent Clp protease adapter protein ClpS (96 aa).

The protein belongs to the ClpS family. As to quaternary structure, binds to the N-terminal domain of the chaperone ClpA.

Its function is as follows. Involved in the modulation of the specificity of the ClpAP-mediated ATP-dependent protein degradation. The chain is ATP-dependent Clp protease adapter protein ClpS from Campylobacter jejuni subsp. doylei (strain ATCC BAA-1458 / RM4099 / 269.97).